We begin with the raw amino-acid sequence, 182 residues long: Crossover junction endodeoxyribonuclease RuvC (182 aa).

Residues Asp7, Glu67, and Asp139 contribute to the active site. Mg(2+) contacts are provided by Asp7, Glu67, and Asp139.

It belongs to the RuvC family. Homodimer which binds Holliday junction (HJ) DNA. The HJ becomes 2-fold symmetrical on binding to RuvC with unstacked arms; it has a different conformation from HJ DNA in complex with RuvA. In the full resolvosome a probable DNA-RuvA(4)-RuvB(12)-RuvC(2) complex forms which resolves the HJ. Mg(2+) is required as a cofactor.

It localises to the cytoplasm. It carries out the reaction Endonucleolytic cleavage at a junction such as a reciprocal single-stranded crossover between two homologous DNA duplexes (Holliday junction).. Functionally, the RuvA-RuvB-RuvC complex processes Holliday junction (HJ) DNA during genetic recombination and DNA repair. Endonuclease that resolves HJ intermediates. Cleaves cruciform DNA by making single-stranded nicks across the HJ at symmetrical positions within the homologous arms, yielding a 5'-phosphate and a 3'-hydroxyl group; requires a central core of homology in the junction. The consensus cleavage sequence is 5'-(A/T)TT(C/G)-3'. Cleavage occurs on the 3'-side of the TT dinucleotide at the point of strand exchange. HJ branch migration catalyzed by RuvA-RuvB allows RuvC to scan DNA until it finds its consensus sequence, where it cleaves and resolves the cruciform DNA. The sequence is that of Crossover junction endodeoxyribonuclease RuvC from Bordetella parapertussis (strain 12822 / ATCC BAA-587 / NCTC 13253).